Here is a 434-residue protein sequence, read N- to C-terminus: MQVSVETTEGLGRRLTISVPAEQIEKMVKDGITREAKRARLPGFRPGKVPLSEINKRYGQAIRQDVMGEVMQRNFIEAIIAEKLNPAGAPTFMPGKSVGESFEFVATFEIYPEITLTGLDTIAVEQPKAEVNDADLDAMIETLRKQHATFAVVERASAAGDKVKMNFVGSIDGEEFDGGKADDFELEIGSNRMIPGFETGVTGHKAGETFDIEVSFPEDYHAENLKGKAAKFAITLTEVQAAQLPEVNDEFATLFGITSGGVDALKAEIRKNMTRELEQALKANVKEQVINGLLAANDVTIPSALIDGEVEVLRKQAMQRFGGQTKNMPELPAELFTEQAERRVKIGLLLGEVIKTSELKAEDSRVQALIASMASAYEDPAEVVAYYNSNKEMMQNMRNVALEEQAVEALLKSAKVTTKEVAFEEFMNKASGRA.

The PPIase FKBP-type domain maps to 160 to 245 (GDKVKMNFVG…LTEVQAAQLP (86 aa)).

The protein belongs to the FKBP-type PPIase family. Tig subfamily.

The protein resides in the cytoplasm. It catalyses the reaction [protein]-peptidylproline (omega=180) = [protein]-peptidylproline (omega=0). Functionally, involved in protein export. Acts as a chaperone by maintaining the newly synthesized protein in an open conformation. Functions as a peptidyl-prolyl cis-trans isomerase. This Shewanella denitrificans (strain OS217 / ATCC BAA-1090 / DSM 15013) protein is Trigger factor.